A 313-amino-acid polypeptide reads, in one-letter code: Porphobilinogen deaminase (313 aa).

Cys242 is subject to S-(dipyrrolylmethanemethyl)cysteine.

Belongs to the HMBS family. As to quaternary structure, monomer. Dipyrromethane is required as a cofactor.

It carries out the reaction 4 porphobilinogen + H2O = hydroxymethylbilane + 4 NH4(+). It participates in porphyrin-containing compound metabolism; protoporphyrin-IX biosynthesis; coproporphyrinogen-III from 5-aminolevulinate: step 2/4. Its function is as follows. Tetrapolymerization of the monopyrrole PBG into the hydroxymethylbilane pre-uroporphyrinogen in several discrete steps. In Escherichia coli O45:K1 (strain S88 / ExPEC), this protein is Porphobilinogen deaminase.